The primary structure comprises 552 residues: 5'-AMP-activated protein kinase catalytic subunit alpha-2 (552 aa).

Positions 16–268 (YVLGDTLGVG…IKDIREHEWF (253 aa)) constitute a Protein kinase domain. Residues 22–30 (LGVGTFGKV) and lysine 45 each bind ATP. Aspartate 139 functions as the Proton acceptor in the catalytic mechanism. Threonine 172 bears the Phosphothreonine; by LKB1 and CaMKK2 mark. Residue threonine 258 is modified to Phosphothreonine. The AIS stretch occupies residues 291 to 376 (EAVKEVCEKF…PERMPPLIAD (86 aa)). Serine 377 carries the post-translational modification Phosphoserine. Residues 477–521 (VEQRSGSSTPQRSCSAAGLHRPRSSFDSTTAESHSLSGSLTGSLT) are disordered. Over residues 480–490 (RSGSSTPQRSC) the composition is skewed to polar residues. At serine 491 the chain carries Phosphoserine. Positions 501–510 (SFDSTTAESH) are enriched in polar residues. Over residues 511–521 (SLSGSLTGSLT) the composition is skewed to low complexity.

This sequence belongs to the protein kinase superfamily. CAMK Ser/Thr protein kinase family. SNF1 subfamily. In terms of assembly, AMPK is a heterotrimer of an alpha catalytic subunit (PRKAA1 or PRKAA2), a beta (PRKAB1 or PRKAB2) and a gamma non-catalytic subunits (PRKAG1, PRKAG2 or PRKAG3). Interacts with FNIP1 and FNIP2. Interacts with DUSP29. Interacts with ARF6. The phosphorylated form at Thr-172 mediated by CamKK2 interacts with ACSS2. Mg(2+) is required as a cofactor. In terms of processing, ubiquitinated. Post-translationally, phosphorylated at Thr-172 by STK11/LKB1 in complex with STE20-related adapter-alpha (STRADA) pseudo kinase and CAB39. Also phosphorylated at Thr-172 by CAMKK2; triggered by a rise in intracellular calcium ions, without detectable changes in the AMP/ATP ratio. CAMKK1 can also phosphorylate Thr-172, but at much lower level. Dephosphorylated by protein phosphatase 2A and 2C (PP2A and PP2C). Phosphorylated by ULK1; leading to negatively regulate AMPK activity and suggesting the existence of a regulatory feedback loop between ULK1 and AMPK. Dephosphorylated by PPM1A and PPM1B at Thr-172 (mediated by STK11/LKB1).

Its subcellular location is the cytoplasm. It localises to the nucleus. The catalysed reaction is L-seryl-[protein] + ATP = O-phospho-L-seryl-[protein] + ADP + H(+). The enzyme catalyses L-threonyl-[protein] + ATP = O-phospho-L-threonyl-[protein] + ADP + H(+). It catalyses the reaction L-seryl-[acetyl-CoA carboxylase] + ATP = O-phospho-L-seryl-[acetyl-CoA carboxylase] + ADP + H(+). It carries out the reaction L-seryl-[3-hydroxy-3-methylglutaryl-coenzyme A reductase] + ATP = O-phospho-L-seryl-[3-hydroxy-3-methylglutaryl-coenzyme A reductase] + ADP + H(+). With respect to regulation, activated by phosphorylation on Thr-172. Binding of AMP to non-catalytic gamma subunit (PRKAG1, PRKAG2 or PRKAG3) results in allosteric activation, inducing phosphorylation on Thr-172. AMP-binding to gamma subunit also sustains activity by preventing dephosphorylation of Thr-172. ADP also stimulates Thr-172 phosphorylation, without stimulating already phosphorylated AMPK. ATP promotes dephosphorylation of Thr-172, rendering the enzyme inactive. Under physiological conditions AMPK mainly exists in its inactive form in complex with ATP, which is much more abundant than AMP. Selectively inhibited by compound C (6-[4-(2-Piperidin-1-yl-ethoxy)-phenyl)]-3-pyridin-4-yl-pyyrazolo[1,5-a] pyrimidine. Activated by resveratrol, a natural polyphenol present in red wine, and S17834, a synthetic polyphenol. Salicylate/aspirin directly activates kinase activity, primarily by inhibiting Thr-172 dephosphorylation. In terms of biological role, catalytic subunit of AMP-activated protein kinase (AMPK), an energy sensor protein kinase that plays a key role in regulating cellular energy metabolism. In response to reduction of intracellular ATP levels, AMPK activates energy-producing pathways and inhibits energy-consuming processes: inhibits protein, carbohydrate and lipid biosynthesis, as well as cell growth and proliferation. AMPK acts via direct phosphorylation of metabolic enzymes, and by longer-term effects via phosphorylation of transcription regulators. Regulates lipid synthesis by phosphorylating and inactivating lipid metabolic enzymes such as ACACA, ACACB, GYS1, HMGCR and LIPE; regulates fatty acid and cholesterol synthesis by phosphorylating acetyl-CoA carboxylase (ACACA and ACACB) and hormone-sensitive lipase (LIPE) enzymes, respectively. Promotes lipolysis of lipid droplets by mediating phosphorylation of isoform 1 of CHKA (CHKalpha2). Regulates insulin-signaling and glycolysis by phosphorylating IRS1, PFKFB2 and PFKFB3. Involved in insulin receptor/INSR internalization. AMPK stimulates glucose uptake in muscle by increasing the translocation of the glucose transporter SLC2A4/GLUT4 to the plasma membrane, possibly by mediating phosphorylation of TBC1D4/AS160. Regulates transcription and chromatin structure by phosphorylating transcription regulators involved in energy metabolism such as CRTC2/TORC2, FOXO3, histone H2B, HDAC5, MEF2C, MLXIPL/ChREBP, EP300, HNF4A, p53/TP53, SREBF1, SREBF2 and PPARGC1A. Acts as a key regulator of glucose homeostasis in liver by phosphorylating CRTC2/TORC2, leading to CRTC2/TORC2 sequestration in the cytoplasm. In response to stress, phosphorylates 'Ser-36' of histone H2B (H2BS36ph), leading to promote transcription. Acts as a key regulator of cell growth and proliferation by phosphorylating FNIP1, TSC2, RPTOR, WDR24 and ATG1/ULK1: in response to nutrient limitation, negatively regulates the mTORC1 complex by phosphorylating RPTOR component of the mTORC1 complex and by phosphorylating and activating TSC2. Also phosphorylates and inhibits GATOR2 subunit WDR24 in response to nutrient limitation, leading to suppress glucose-mediated mTORC1 activation. In response to energetic stress, phosphorylates FNIP1, inactivating the non-canonical mTORC1 signaling, thereby promoting nuclear translocation of TFEB and TFE3, and inducing transcription of lysosomal or autophagy genes. In response to nutrient limitation, promotes autophagy by phosphorylating and activating ATG1/ULK1. In that process also activates WDR45/WIPI4. Phosphorylates CASP6, thereby preventing its autoprocessing and subsequent activation. AMPK also acts as a regulator of circadian rhythm by mediating phosphorylation of CRY1, leading to destabilize it. May regulate the Wnt signaling pathway by phosphorylating CTNNB1, leading to stabilize it. Also acts as a regulator of cellular polarity by remodeling the actin cytoskeleton; probably by indirectly activating myosin. Also phosphorylates CFTR, EEF2K, KLC1, NOS3 and SLC12A1. Plays an important role in the differential regulation of pro-autophagy (composed of PIK3C3, BECN1, PIK3R4 and UVRAG or ATG14) and non-autophagy (composed of PIK3C3, BECN1 and PIK3R4) complexes, in response to glucose starvation. Can inhibit the non-autophagy complex by phosphorylating PIK3C3 and can activate the pro-autophagy complex by phosphorylating BECN1. Upon glucose starvation, promotes ARF6 activation in a kinase-independent manner leading to cell migration. Upon glucose deprivation mediates the phosphorylation of ACSS2 at 'Ser-659', which exposes the nuclear localization signal of ACSS2, required for its interaction with KPNA1 and nuclear translocation. Upon stress, regulates mitochondrial fragmentation through phosphorylation of MTFR1L. This chain is 5'-AMP-activated protein kinase catalytic subunit alpha-2 (PRKAA2), found in Pongo abelii (Sumatran orangutan).